The primary structure comprises 124 residues: Small ribosomal subunit protein uS12 (124 aa).

Position 89 is a 3-methylthioaspartic acid (aspartate 89).

Belongs to the universal ribosomal protein uS12 family. Part of the 30S ribosomal subunit. Contacts proteins S8 and S17. May interact with IF1 in the 30S initiation complex.

In terms of biological role, with S4 and S5 plays an important role in translational accuracy. Interacts with and stabilizes bases of the 16S rRNA that are involved in tRNA selection in the A site and with the mRNA backbone. Located at the interface of the 30S and 50S subunits, it traverses the body of the 30S subunit contacting proteins on the other side and probably holding the rRNA structure together. The combined cluster of proteins S8, S12 and S17 appears to hold together the shoulder and platform of the 30S subunit. The sequence is that of Small ribosomal subunit protein uS12 from Serratia proteamaculans (strain 568).